A 307-amino-acid polypeptide reads, in one-letter code: Small ribosomal subunit biogenesis GTPase RsgA (307 aa).

Positions 80-237 (KVDLRQAIVS…IVDTPGIKEF (158 aa)) constitute a CP-type G domain. Residues 129-132 (NKID) and 180-188 (GQSGVGKSS) contribute to the GTP site. Positions 261, 266, 268, and 274 each coordinate Zn(2+).

Belongs to the TRAFAC class YlqF/YawG GTPase family. RsgA subfamily. Monomer. Associates with 30S ribosomal subunit, binds 16S rRNA. Zn(2+) is required as a cofactor.

The protein localises to the cytoplasm. One of several proteins that assist in the late maturation steps of the functional core of the 30S ribosomal subunit. Helps release RbfA from mature subunits. May play a role in the assembly of ribosomal proteins into the subunit. Circularly permuted GTPase that catalyzes slow GTP hydrolysis, GTPase activity is stimulated by the 30S ribosomal subunit. This chain is Small ribosomal subunit biogenesis GTPase RsgA, found in Borrelia garinii subsp. bavariensis (strain ATCC BAA-2496 / DSM 23469 / PBi) (Borreliella bavariensis).